We begin with the raw amino-acid sequence, 272 residues long: MKKIVESTTFPRTKQSITEDLKALGLKKGMTVLVHSSLSSIGWVNGGAVAVIQALIDVVTEEGTIVMPSQSVELSDPKEWGNPPVPEEWWDIIRESMPAYNSNYTPTTRGMGQIVELFRSYPEVKRSNHPNYSFVAWGKHKNKILNQHPLEFGLGEQSPLGKLYIRESYVLLLGADFDSSTCFHLAEYRIPYQKIINRGAPIIVEGKRVWKEYKELEFREELFQEVGQAFEAEHNMKVGKVGSANCRLFSLTEAVDFAEKWFINNDSKNIKK.

CoA is bound by residues 38-44 and Gln113; that span reads LSSIGWV.

The protein belongs to the antibiotic N-acetyltransferase family. In terms of assembly, homodimer.

May contribute to antibiotic resistance. The sequence is that of SPbeta prophage-derived aminoglycoside N(3')-acetyltransferase-like protein YokD (yokD) from Bacillus subtilis (strain 168).